A 451-amino-acid polypeptide reads, in one-letter code: Phosphoglucosamine mutase (451 aa).

The active-site Phosphoserine intermediate is Ser-107. 4 residues coordinate Mg(2+): Ser-107, Asp-246, Asp-248, and Asp-250. Ser-107 bears the Phosphoserine mark.

Belongs to the phosphohexose mutase family. Mg(2+) is required as a cofactor. Activated by phosphorylation.

The catalysed reaction is alpha-D-glucosamine 1-phosphate = D-glucosamine 6-phosphate. In terms of biological role, catalyzes the conversion of glucosamine-6-phosphate to glucosamine-1-phosphate. This chain is Phosphoglucosamine mutase, found in Burkholderia ambifaria (strain MC40-6).